The sequence spans 521 residues: Probable methylmalonate-semialdehyde/malonate-semialdehyde dehydrogenase [acylating], mitochondrial (521 aa).

Residues phenylalanine 172, lysine 196, glutamate 199, arginine 200, and serine 249 each coordinate NAD(+). The active-site Nucleophile is the cysteine 304. Glutamate 404 contacts NAD(+).

This sequence belongs to the aldehyde dehydrogenase family. Homotetramer.

The protein localises to the mitochondrion. The catalysed reaction is 2-methyl-3-oxopropanoate + NAD(+) + CoA + H2O = propanoyl-CoA + hydrogencarbonate + NADH + H(+). The enzyme catalyses 3-oxopropanoate + NAD(+) + CoA + H2O = hydrogencarbonate + acetyl-CoA + NADH + H(+). In terms of biological role, probable malonate and methylmalonate semialdehyde dehydrogenase involved in the catabolism of valine, thymine, and compounds catabolized by way of beta-alanine, including uracil and cytidine. The sequence is that of Probable methylmalonate-semialdehyde/malonate-semialdehyde dehydrogenase [acylating], mitochondrial from Aedes aegypti (Yellowfever mosquito).